The following is a 529-amino-acid chain: MRSEKSLTLAAPGEVRGPEGEQQDAGEFQEAEGGGGCCSSERLVINISGLRFETQLRTLSLFPDTLLGDPGRRVRFFDPLRNEYFFDRNRPSFDAILYYYQSGGRLRRPVNVPLDIFMEEIRFYQLGEEALAAFREDEGCLPEGGEDEKPLPSQPFQRQVWLLFEYPESSGPARGIAIVSVLVILISIVIFCLETLPQFRADGRGGSNEGSGTRLSPASRSHEEEDEDEDSYAFPGSIPSGGLGTGGTSSLSTLGGSFFTDPFFLVETLCIVWFTFELLVRFSACPSKAAFFRNIMNIIDLVAIFPYFITLGTELVQRHEQQSVSGGSGQNGQQAMSLAILRVIRLVRVFRIFKLSRHSKGLQILGKTLQASMRELGLLIFFLFIGVILFSSAVYFAEADDVDSLFPSIPDAFWWAVVTMTTVGYGDMYPMTVGGKIVGSLCAIAGVLTIALPVPVIVSNFNYFYHRETEQEEQGQYTHVTCGQPTPDLKATDNGLGKPDFAEASRERRPSYLPTPHRAYAEKRMLTEV.

Positions 1-35 (MRSEKSLTLAAPGEVRGPEGEQQDAGEFQEAEGGG) are disordered. At 1 to 171 (MRSEKSLTLA…LLFEYPESSG (171 aa)) the chain is on the cytoplasmic side. Serine 3 bears the Phosphoserine mark. Acidic residues predominate over residues 21 to 30 (EQQDAGEFQE). Residues 172–193 (PARGIAIVSVLVILISIVIFCL) traverse the membrane as a helical segment. Residues 194–262 (ETLPQFRADG…TLGGSFFTDP (69 aa)) are Extracellular-facing. The segment at 203 to 238 (GRGGSNEGSGTRLSPASRSHEEEDEDEDSYAFPGSI) is disordered. Residues 210–219 (GSGTRLSPAS) show a composition bias toward polar residues. The helical transmembrane segment at 263-284 (FFLVETLCIVWFTFELLVRFSA) threads the bilayer. Residue cysteine 285 is the site of S-palmitoyl cysteine attachment. At 285–295 (CPSKAAFFRNI) the chain is on the cytoplasmic side. A helical transmembrane segment spans residues 296–316 (MNIIDLVAIFPYFITLGTELV). The Extracellular segment spans residues 317–337 (QRHEQQSVSGGSGQNGQQAMS). The helical; Voltage-sensor transmembrane segment at 338 to 358 (LAILRVIRLVRVFRIFKLSRH) threads the bilayer. The Cytoplasmic portion of the chain corresponds to 359 to 373 (SKGLQILGKTLQASM). An S4-S5 linker region spans residues 360–373 (KGLQILGKTLQASM). The helical transmembrane segment at 374 to 395 (RELGLLIFFLFIGVILFSSAVY) threads the bilayer. At 396-409 (FAEADDVDSLFPSI) the chain is on the extracellular side. The helical intramembrane region spans 410–421 (PDAFWWAVVTMT). The Selectivity filter signature appears at 422–427 (TVGYGD). An intramembrane segment occupies 422–429 (TVGYGDMY). The Extracellular segment spans residues 430–436 (PMTVGGK). The helical transmembrane segment at 437–465 (IVGSLCAIAGVLTIALPVPVIVSNFNYFY) threads the bilayer. Over 466-529 (HRETEQEEQG…YAEKRMLTEV (64 aa)) the chain is Cytoplasmic. The disordered stretch occupies residues 488-513 (DLKATDNGLGKPDFAEASRERRPSYL). Residues 500 to 510 (DFAEASRERRP) show a composition bias toward basic and acidic residues. Serine 511 carries the post-translational modification Phosphoserine; by PKA. A PDZ-binding motif is present at residues 527–529 (TEV).

Belongs to the potassium channel family. A (Shaker) (TC 1.A.1.2) subfamily. Kv1.6/KCNA6 sub-subfamily. Homotetramer and heterotetramer of potassium channel proteins. Interacts with KCNAB1 and KCNAB2.

It localises to the cell membrane. The enzyme catalyses K(+)(in) = K(+)(out). In terms of biological role, voltage-gated potassium channel that mediates transmembrane potassium transport in excitable membranes. Forms tetrameric potassium-selective channels through which potassium ions pass in accordance with their electrochemical gradient. The channel alternates between opened and closed conformations in response to the voltage difference across the membrane. Can form functional homotetrameric channels and heterotetrameric channels that contain variable proportions of KCNA1, KCNA2, KCNA4, KCNA6, and possibly other family members as well; channel properties depend on the type of alpha subunits that are part of the channel. Channel properties are modulated by cytoplasmic beta subunits that regulate the subcellular location of the alpha subunits and promote rapid inactivation. Homotetrameric channels display rapid activation and slow inactivation. The protein is Potassium voltage-gated channel subfamily A member 6 (Kcna6) of Mus musculus (Mouse).